We begin with the raw amino-acid sequence, 1406 residues long: DNA-directed RNA polymerase subunit beta' (1406 aa).

Zn(2+)-binding residues include Cys70, Cys72, Cys85, and Cys88. Mg(2+) is bound by residues Asp460, Asp462, and Asp464. Positions 814, 888, 895, and 898 each coordinate Zn(2+).

It belongs to the RNA polymerase beta' chain family. As to quaternary structure, the RNAP catalytic core consists of 2 alpha, 1 beta, 1 beta' and 1 omega subunit. When a sigma factor is associated with the core the holoenzyme is formed, which can initiate transcription. The cofactor is Mg(2+). Zn(2+) serves as cofactor.

The enzyme catalyses RNA(n) + a ribonucleoside 5'-triphosphate = RNA(n+1) + diphosphate. DNA-dependent RNA polymerase catalyzes the transcription of DNA into RNA using the four ribonucleoside triphosphates as substrates. The polypeptide is DNA-directed RNA polymerase subunit beta' (Colwellia psychrerythraea (strain 34H / ATCC BAA-681) (Vibrio psychroerythus)).